The sequence spans 330 residues: Aspartate--ammonia ligase (330 aa).

Belongs to the class-II aminoacyl-tRNA synthetase family. AsnA subfamily.

It is found in the cytoplasm. The catalysed reaction is L-aspartate + NH4(+) + ATP = L-asparagine + AMP + diphosphate + H(+). It functions in the pathway amino-acid biosynthesis; L-asparagine biosynthesis; L-asparagine from L-aspartate (ammonia route): step 1/1. This Salmonella paratyphi A (strain ATCC 9150 / SARB42) protein is Aspartate--ammonia ligase.